Reading from the N-terminus, the 208-residue chain is Glycerol-3-phosphate acyltransferase (208 aa).

The next 5 helical transmembrane spans lie at 4–24 (LALS…AVLI), 56–76 (VAVL…GYFL), 80–100 (PFML…PIFF), 117–137 (PIGL…VVLF), and 139–159 (YSSL…WLIK).

It belongs to the PlsY family. Probably interacts with PlsX.

It localises to the cell inner membrane. The enzyme catalyses an acyl phosphate + sn-glycerol 3-phosphate = a 1-acyl-sn-glycero-3-phosphate + phosphate. It participates in lipid metabolism; phospholipid metabolism. Catalyzes the transfer of an acyl group from acyl-phosphate (acyl-PO(4)) to glycerol-3-phosphate (G3P) to form lysophosphatidic acid (LPA). This enzyme utilizes acyl-phosphate as fatty acyl donor, but not acyl-CoA or acyl-ACP. The sequence is that of Glycerol-3-phosphate acyltransferase from Vibrio cholerae serotype O1 (strain ATCC 39541 / Classical Ogawa 395 / O395).